The following is a 538-amino-acid chain: Chaperonin GroEL (538 aa).

Residues Thr29 to Pro32, Asp86 to Thr90, Gly413, Asp479 to Leu481, and Asp495 each bind ATP.

The protein belongs to the chaperonin (HSP60) family. Forms a cylinder of 14 subunits composed of two heptameric rings stacked back-to-back. Interacts with the co-chaperonin GroES.

It is found in the cytoplasm. It catalyses the reaction ATP + H2O + a folded polypeptide = ADP + phosphate + an unfolded polypeptide.. In terms of biological role, together with its co-chaperonin GroES, plays an essential role in assisting protein folding. The GroEL-GroES system forms a nano-cage that allows encapsulation of the non-native substrate proteins and provides a physical environment optimized to promote and accelerate protein folding. This chain is Chaperonin GroEL, found in Thermotoga neapolitana.